We begin with the raw amino-acid sequence, 189 residues long: Recombination protein RecR (189 aa).

The C4-type zinc-finger motif lies at 48–63 (CQTCFHLSAEPLCDIC). The 95-residue stretch at 71–165 (QLLCVVADSR…QVSRIAYGLP (95 aa)) folds into the Toprim domain.

This sequence belongs to the RecR family.

Functionally, may play a role in DNA repair. It seems to be involved in an RecBC-independent recombinational process of DNA repair. It may act with RecF and RecO. In Prochlorococcus marinus (strain MIT 9313), this protein is Recombination protein RecR.